Reading from the N-terminus, the 180-residue chain is Large ribosomal subunit protein uL5 (180 aa).

The protein belongs to the universal ribosomal protein uL5 family. In terms of assembly, part of the 50S ribosomal subunit; part of the 5S rRNA/L5/L18/L25 subcomplex. Contacts the 5S rRNA and the P site tRNA. Forms a bridge to the 30S subunit in the 70S ribosome.

Its function is as follows. This is one of the proteins that bind and probably mediate the attachment of the 5S RNA into the large ribosomal subunit, where it forms part of the central protuberance. In the 70S ribosome it contacts protein S13 of the 30S subunit (bridge B1b), connecting the 2 subunits; this bridge is implicated in subunit movement. Contacts the P site tRNA; the 5S rRNA and some of its associated proteins might help stabilize positioning of ribosome-bound tRNAs. The polypeptide is Large ribosomal subunit protein uL5 (Synechocystis sp. (strain ATCC 27184 / PCC 6803 / Kazusa)).